The chain runs to 87 residues: Small ribosomal subunit protein eS21 (87 aa).

This sequence belongs to the eukaryotic ribosomal protein eS21 family. As to quaternary structure, component of the small ribosomal subunit (SSU). Mature N.crassa ribosomes consist of a small (40S) and a large (60S) subunit. The 40S small subunit contains 1 molecule of ribosomal RNA (18S rRNA) and at least 32 different proteins. The large 60S subunit contains 3 rRNA molecules (26S, 5.8S and 5S rRNA) and at least 42 different proteins.

It localises to the cytoplasm. Component of the ribosome, a large ribonucleoprotein complex responsible for the synthesis of proteins in the cell. The small ribosomal subunit (SSU) binds messenger RNAs (mRNAs) and translates the encoded message by selecting cognate aminoacyl-transfer RNA (tRNA) molecules. The large subunit (LSU) contains the ribosomal catalytic site termed the peptidyl transferase center (PTC), which catalyzes the formation of peptide bonds, thereby polymerizing the amino acids delivered by tRNAs into a polypeptide chain. The nascent polypeptides leave the ribosome through a tunnel in the LSU and interact with protein factors that function in enzymatic processing, targeting, and the membrane insertion of nascent chains at the exit of the ribosomal tunnel. This is Small ribosomal subunit protein eS21 (crp-7) from Neurospora crassa (strain ATCC 24698 / 74-OR23-1A / CBS 708.71 / DSM 1257 / FGSC 987).